The chain runs to 333 residues: Anthranilate phosphoribosyltransferase (333 aa).

5-phospho-alpha-D-ribose 1-diphosphate contacts are provided by residues Gly80, 83–84 (GD), Ser88, 90–93 (NIST), 108–116 (KHGNRSVSS), and Ser120. Gly80 is a binding site for anthranilate. Ser92 is a Mg(2+) binding site. Asn111 contributes to the anthranilate binding site. Position 166 (Arg166) interacts with anthranilate. The Mg(2+) site is built by Asp224 and Glu225.

It belongs to the anthranilate phosphoribosyltransferase family. As to quaternary structure, homodimer. Mg(2+) is required as a cofactor.

It carries out the reaction N-(5-phospho-beta-D-ribosyl)anthranilate + diphosphate = 5-phospho-alpha-D-ribose 1-diphosphate + anthranilate. It functions in the pathway amino-acid biosynthesis; L-tryptophan biosynthesis; L-tryptophan from chorismate: step 2/5. In terms of biological role, catalyzes the transfer of the phosphoribosyl group of 5-phosphorylribose-1-pyrophosphate (PRPP) to anthranilate to yield N-(5'-phosphoribosyl)-anthranilate (PRA). This Yersinia pseudotuberculosis serotype O:1b (strain IP 31758) protein is Anthranilate phosphoribosyltransferase.